The primary structure comprises 743 residues: Threonine synthase-like 1 (743 aa).

The residue at position 281 (lysine 281) is an N6-acetyllysine. N6-(pyridoxal phosphate)lysine is present on lysine 351.

This sequence belongs to the threonine synthase family. Pyridoxal 5'-phosphate is required as a cofactor.

This Macaca fascicularis (Crab-eating macaque) protein is Threonine synthase-like 1 (THNSL1).